A 496-amino-acid chain; its full sequence is Cytochrome P450 71D180 (496 aa).

A helical; Signal-anchor for type II membrane protein transmembrane segment spans residues 1–21 (MDISISWVVIIVFVLSYLILM). C435 contacts heme.

It belongs to the cytochrome P450 family. Requires heme as cofactor. As to expression, mostly expressed in flowers and, to a lower extent, in leaves, especially in glandular trichomes.

Its subcellular location is the membrane. It catalyses the reaction (4R)-limonene + reduced [NADPH--hemoprotein reductase] + O2 = (1R,5S)-carveol + oxidized [NADPH--hemoprotein reductase] + H2O + H(+). The catalysed reaction is (4S)-limonene + reduced [NADPH--hemoprotein reductase] + O2 = (1S,5R)-carveol + oxidized [NADPH--hemoprotein reductase] + H2O + H(+). The enzyme catalyses gamma-terpinene + 2 reduced [NADPH--hemoprotein reductase] + 2 O2 = carvacrol + 2 oxidized [NADPH--hemoprotein reductase] + 3 H2O + 2 H(+). Its pathway is secondary metabolite biosynthesis; terpenoid biosynthesis. In terms of biological role, involved in the biosynthesis of phenolic monoterpenes natural products thymol and carvacrol which have a broad range of biological activities acting as antimicrobial compounds, insecticides, antioxidants and pharmaceutical agents. Catalyzes the C2-hydroxylation of gamma-terpinene to produce carvacrol. Mediates also the C6-hydroxylation of (4S)-limonene and (4R)-limonene to form carveol. This Thymus vulgaris (Thyme) protein is Cytochrome P450 71D180.